The sequence spans 525 residues: GMP synthase [glutamine-hydrolyzing] (525 aa).

Positions 8–207 constitute a Glutamine amidotransferase type-1 domain; that stretch reads KILILDFGSQ…ALEICGCPAN (200 aa). Cys-85 (nucleophile) is an active-site residue. Residues His-181 and Glu-183 contribute to the active site. One can recognise a GMPS ATP-PPase domain in the interval 208 to 400; it reads WKPSSIIEDA…LGLPYDMLYR (193 aa). 235–241 provides a ligand contact to ATP; it reads SGGVDSS.

As to quaternary structure, homodimer.

It catalyses the reaction XMP + L-glutamine + ATP + H2O = GMP + L-glutamate + AMP + diphosphate + 2 H(+). Its pathway is purine metabolism; GMP biosynthesis; GMP from XMP (L-Gln route): step 1/1. Its function is as follows. Catalyzes the synthesis of GMP from XMP. This Shewanella pealeana (strain ATCC 700345 / ANG-SQ1) protein is GMP synthase [glutamine-hydrolyzing].